Here is a 320-residue protein sequence, read N- to C-terminus: Aspartate carbamoyltransferase catalytic subunit (320 aa).

Positions 68 and 69 each coordinate carbamoyl phosphate. K96 serves as a coordination point for L-aspartate. Carbamoyl phosphate is bound by residues R118, H148, and Q151. Positions 181 and 236 each coordinate L-aspartate. Carbamoyl phosphate-binding residues include G277 and P278.

Belongs to the aspartate/ornithine carbamoyltransferase superfamily. ATCase family. In terms of assembly, heterododecamer (2C3:3R2) of six catalytic PyrB chains organized as two trimers (C3), and six regulatory PyrI chains organized as three dimers (R2).

The enzyme catalyses carbamoyl phosphate + L-aspartate = N-carbamoyl-L-aspartate + phosphate + H(+). The protein operates within pyrimidine metabolism; UMP biosynthesis via de novo pathway; (S)-dihydroorotate from bicarbonate: step 2/3. Its function is as follows. Catalyzes the condensation of carbamoyl phosphate and aspartate to form carbamoyl aspartate and inorganic phosphate, the committed step in the de novo pyrimidine nucleotide biosynthesis pathway. The protein is Aspartate carbamoyltransferase catalytic subunit of Acidovorax ebreus (strain TPSY) (Diaphorobacter sp. (strain TPSY)).